Here is a 114-residue protein sequence, read N- to C-terminus: Large ribosomal subunit protein bL19 (114 aa).

The protein belongs to the bacterial ribosomal protein bL19 family.

Functionally, this protein is located at the 30S-50S ribosomal subunit interface and may play a role in the structure and function of the aminoacyl-tRNA binding site. This Desulfatibacillum aliphaticivorans protein is Large ribosomal subunit protein bL19.